A 417-amino-acid chain; its full sequence is Imidazolonepropionase (417 aa).

Residues H77 and H79 each contribute to the Fe(3+) site. Zn(2+)-binding residues include H77 and H79. 4-imidazolone-5-propanoate is bound by residues R86, Y149, and H182. Y149 serves as a coordination point for N-formimidoyl-L-glutamate. Fe(3+) is bound at residue H247. H247 contributes to the Zn(2+) binding site. Q250 provides a ligand contact to 4-imidazolone-5-propanoate. D322 lines the Fe(3+) pocket. D322 serves as a coordination point for Zn(2+). N324 and G326 together coordinate N-formimidoyl-L-glutamate. T327 contacts 4-imidazolone-5-propanoate.

The protein belongs to the metallo-dependent hydrolases superfamily. HutI family. It depends on Zn(2+) as a cofactor. Fe(3+) is required as a cofactor.

Its subcellular location is the cytoplasm. It catalyses the reaction 4-imidazolone-5-propanoate + H2O = N-formimidoyl-L-glutamate. Its pathway is amino-acid degradation; L-histidine degradation into L-glutamate; N-formimidoyl-L-glutamate from L-histidine: step 3/3. Functionally, catalyzes the hydrolytic cleavage of the carbon-nitrogen bond in imidazolone-5-propanoate to yield N-formimidoyl-L-glutamate. It is the third step in the universal histidine degradation pathway. The polypeptide is Imidazolonepropionase (Cupriavidus taiwanensis (strain DSM 17343 / BCRC 17206 / CCUG 44338 / CIP 107171 / LMG 19424 / R1) (Ralstonia taiwanensis (strain LMG 19424))).